The primary structure comprises 425 residues: CDP-diacylglycerol--serine O-phosphatidyltransferase 1 (425 aa).

The span at Met1–Leu16 shows a compositional bias: basic and acidic residues. The segment at Met1–Gly23 is disordered. 9 consecutive transmembrane segments (helical) span residues Thr42 to Pro62, Trp79 to Ile99, Ile105 to Phe125, Pro197 to Leu217, Ser227 to Val247, Phe296 to Leu316, Trp321 to Ile341, Gly361 to Phe381, and Met390 to Leu410.

The protein belongs to the CDP-alcohol phosphatidyltransferase class-I family. In terms of tissue distribution, expressed in trichomes, leaf veins and root vasculature.

It is found in the endoplasmic reticulum membrane. The protein resides in the nucleus envelope. It carries out the reaction a CDP-1,2-diacyl-sn-glycerol + L-serine = a 1,2-diacyl-sn-glycero-3-phospho-L-serine + CMP + H(+). It participates in phospholipid metabolism; phosphatidylethanolamine biosynthesis; phosphatidylethanolamine from CDP-diacylglycerol: step 1/2. Catalyzes a base-exchange reaction in which the polar head group of phosphatidylethanolamine (PE) or phosphatidylcholine (PC) is replaced by L-serine. Is essential for phosphatidylserine (PS) biosynthesis and PE seems to be the most plausible substrate. Plays an important role in microspore maturation. In Arabidopsis thaliana (Mouse-ear cress), this protein is CDP-diacylglycerol--serine O-phosphatidyltransferase 1 (PSS1).